Consider the following 162-residue polypeptide: uncharacterized protein (162 aa).

An N-terminal signal peptide occupies residues 1–23 (MLSLKSPAVLLSMVILVPLFALA).

This is an uncharacterized protein from Mycosarcoma maydis (Corn smut fungus).